The primary structure comprises 602 residues: Isocitrate dehydrogenase kinase/phosphatase (602 aa).

ATP-binding positions include 325–331 (APGIKGM) and K346. D381 is an active-site residue.

It belongs to the AceK family.

It is found in the cytoplasm. It carries out the reaction L-seryl-[isocitrate dehydrogenase] + ATP = O-phospho-L-seryl-[isocitrate dehydrogenase] + ADP + H(+). Its function is as follows. Bifunctional enzyme which can phosphorylate or dephosphorylate isocitrate dehydrogenase (IDH) on a specific serine residue. This is a regulatory mechanism which enables bacteria to bypass the Krebs cycle via the glyoxylate shunt in response to the source of carbon. When bacteria are grown on glucose, IDH is fully active and unphosphorylated, but when grown on acetate or ethanol, the activity of IDH declines drastically concomitant with its phosphorylation. This chain is Isocitrate dehydrogenase kinase/phosphatase, found in Paracidovorax citrulli (strain AAC00-1) (Acidovorax citrulli).